Consider the following 238-residue polypeptide: UPF0328 protein ECU07_0010 (238 aa).

Disordered regions lie at residues 1–154 and 211–238; these read MAAP…NTQR and GRLHGSPTKGAQTAQQAQPHPPKQLATL. A compositionally biased stretch (basic and acidic residues) spans 106–128; that stretch reads HTEGCHTHEANPEPNTKHTETES. Over residues 129–152 the composition is skewed to polar residues; the sequence is PKPQTSTQHHTPITIPSSLLSQNT.

The protein belongs to the UPF0328 family.

This is UPF0328 protein ECU07_0010 from Encephalitozoon cuniculi (strain GB-M1) (Microsporidian parasite).